The chain runs to 206 residues: 2,3-bisphosphoglycerate-dependent phosphoglycerate mutase (206 aa).

Residues 9–16 (RHGQSEWN), 22–23 (TG), arginine 61, 88–91 (ERDY), lysine 99, 115–116 (RR), and 159–160 (GN) each bind substrate. Histidine 10 functions as the Tele-phosphohistidine intermediate in the catalytic mechanism. Residue glutamate 88 is the Proton donor/acceptor of the active site.

The protein belongs to the phosphoglycerate mutase family. BPG-dependent PGAM subfamily. As to quaternary structure, homodimer.

The catalysed reaction is (2R)-2-phosphoglycerate = (2R)-3-phosphoglycerate. It participates in carbohydrate degradation; glycolysis; pyruvate from D-glyceraldehyde 3-phosphate: step 3/5. Functionally, catalyzes the interconversion of 2-phosphoglycerate and 3-phosphoglycerate. The sequence is that of 2,3-bisphosphoglycerate-dependent phosphoglycerate mutase from Bartonella bacilliformis (strain ATCC 35685 / KC583 / Herrer 020/F12,63).